The following is a 149-amino-acid chain: Large ribosomal subunit protein uL13 (149 aa).

This sequence belongs to the universal ribosomal protein uL13 family. As to quaternary structure, part of the 50S ribosomal subunit.

Functionally, this protein is one of the early assembly proteins of the 50S ribosomal subunit, although it is not seen to bind rRNA by itself. It is important during the early stages of 50S assembly. The protein is Large ribosomal subunit protein uL13 of Bifidobacterium longum subsp. infantis (strain ATCC 15697 / DSM 20088 / JCM 1222 / NCTC 11817 / S12).